The chain runs to 150 residues: Small ribosomal subunit protein uS13 (150 aa).

A disordered region spans residues Q131–K150.

The protein belongs to the universal ribosomal protein uS13 family. Part of the 30S ribosomal subunit. Forms a loose heterodimer with protein S19. Forms two bridges to the 50S subunit in the 70S ribosome.

Its function is as follows. Located at the top of the head of the 30S subunit, it contacts several helices of the 16S rRNA. In the 70S ribosome it contacts the 23S rRNA (bridge B1a) and protein L5 of the 50S subunit (bridge B1b), connecting the 2 subunits; these bridges are implicated in subunit movement. This chain is Small ribosomal subunit protein uS13, found in Methanocaldococcus jannaschii (strain ATCC 43067 / DSM 2661 / JAL-1 / JCM 10045 / NBRC 100440) (Methanococcus jannaschii).